The following is a 439-amino-acid chain: Methylenetetrahydrofolate--tRNA-(uracil-5-)-methyltransferase TrmFO (439 aa).

Position 8–13 (8–13) interacts with FAD; sequence GAGLAG.

It belongs to the MnmG family. TrmFO subfamily. The cofactor is FAD.

The protein localises to the cytoplasm. The catalysed reaction is uridine(54) in tRNA + (6R)-5,10-methylene-5,6,7,8-tetrahydrofolate + NADH + H(+) = 5-methyluridine(54) in tRNA + (6S)-5,6,7,8-tetrahydrofolate + NAD(+). It catalyses the reaction uridine(54) in tRNA + (6R)-5,10-methylene-5,6,7,8-tetrahydrofolate + NADPH + H(+) = 5-methyluridine(54) in tRNA + (6S)-5,6,7,8-tetrahydrofolate + NADP(+). Functionally, catalyzes the folate-dependent formation of 5-methyl-uridine at position 54 (M-5-U54) in all tRNAs. The sequence is that of Methylenetetrahydrofolate--tRNA-(uracil-5-)-methyltransferase TrmFO from Lacticaseibacillus paracasei (strain ATCC 334 / BCRC 17002 / CCUG 31169 / CIP 107868 / KCTC 3260 / NRRL B-441) (Lactobacillus paracasei).